Here is a 400-residue protein sequence, read N- to C-terminus: Large envelope protein (400 aa).

M1 bears the N-acetylmethionine mark. 2 disordered regions span residues 1-24 (MGGWSSKPRKGMGTNLSVPNPLGF) and 89-116 (PAMPPPASTNRQSGRQPTPISPPLRDSH). G2 is lipidated: N-myristoyl glycine; by host. The tract at residues 2 to 119 (GGWSSKPRKG…PPLRDSHPQA (118 aa)) is pre-S1. The tract at residues 2 to 174 (GGWSSKPRKG…SSRIGDPAPN (173 aa)) is pre-S. Topologically, residues 2 to 181 (GGWSSKPRKG…APNMENITSG (180 aa)) are virion surface; in external conformation. Residues 2–253 (GGWSSKPRKG…PGYRWMCLRR (252 aa)) are Intravirion; in internal conformation-facing. Residue W4 is glycosylated (N-linked (GlcNAc...) asparagine). Residues 96 to 106 (STNRQSGRQPT) show a composition bias toward polar residues. The segment at 120–174 (MQWNSTAFHQALQDPRVRGLYFPAGGSSSGTLNPVPTIASHISSISSRIGDPAPN) is pre-S2. The helical transmembrane segment at 182–202 (FLGPLLVLQAGFFLLTRILTI) threads the bilayer. Topologically, residues 203 to 253 (PQSLDSWWTSLNFLGGAPVCLGQNSQSPTSNHSPTSCPPICPGYRWMCLRR) are intravirion; in external conformation. Residues 254 to 274 (FIIFLFILLLCLIFLLVLLDY) traverse the membrane as a helical segment. The Virion surface portion of the chain corresponds to 275-348 (QGMLPVCPLI…WASVRFSWLS (74 aa)). The N-linked (GlcNAc...) asparagine; by host glycan is linked to N320. The chain crosses the membrane as a helical span at residues 349-369 (LLVPFVQWFVGLSPTVWLSAI). Residues 370-375 (WMMWYW) are Intravirion-facing. The helical transmembrane segment at 376 to 398 (GPSLYNILSPFIPLLPIFFCLWV) threads the bilayer. The Virion surface portion of the chain corresponds to 399 to 400 (YI).

Belongs to the orthohepadnavirus major surface antigen family. As to quaternary structure, in its internal form (Li-HBsAg), interacts with the capsid protein and with the isoform S. Interacts with host chaperone CANX. In terms of assembly, associates with host chaperone CANX through its pre-S2 N glycan; this association may be essential for isoform M proper secretion. Interacts with isoform L. Interacts with the antigens of satellite virus HDV (HDVAgs); this interaction is required for encapsidation of HDV genomic RNA. Isoform M is N-terminally acetylated by host at a ratio of 90%, and N-glycosylated by host at the pre-S2 region. Post-translationally, myristoylated.

Its subcellular location is the virion membrane. In terms of biological role, the large envelope protein exists in two topological conformations, one which is termed 'external' or Le-HBsAg and the other 'internal' or Li-HBsAg. In its external conformation the protein attaches the virus to cell receptors and thereby initiating infection. This interaction determines the species specificity and liver tropism. This attachment induces virion internalization predominantly through caveolin-mediated endocytosis. The large envelope protein also assures fusion between virion membrane and endosomal membrane. In its internal conformation the protein plays a role in virion morphogenesis and mediates the contact with the nucleocapsid like a matrix protein. Its function is as follows. The middle envelope protein plays an important role in the budding of the virion. It is involved in the induction of budding in a nucleocapsid independent way. In this process the majority of envelope proteins bud to form subviral lipoprotein particles of 22 nm of diameter that do not contain a nucleocapsid. The chain is Large envelope protein from Hepatitis B virus genotype A1 subtype adw (isolate Philippines/pFDW294/1988) (HBV-A).